We begin with the raw amino-acid sequence, 99 residues long: NADH-quinone oxidoreductase subunit K (99 aa).

3 consecutive transmembrane segments (helical) span residues Pro3–Val23, Ile28–Phe48, and Phe62–Ile82.

Belongs to the complex I subunit 4L family. NDH-1 is composed of 14 different subunits. Subunits NuoA, H, J, K, L, M, N constitute the membrane sector of the complex.

It localises to the cell membrane. The enzyme catalyses a quinone + NADH + 5 H(+)(in) = a quinol + NAD(+) + 4 H(+)(out). Its function is as follows. NDH-1 shuttles electrons from NADH, via FMN and iron-sulfur (Fe-S) centers, to quinones in the respiratory chain. The immediate electron acceptor for the enzyme in this species is believed to be a menaquinone. Couples the redox reaction to proton translocation (for every two electrons transferred, four hydrogen ions are translocated across the cytoplasmic membrane), and thus conserves the redox energy in a proton gradient. The protein is NADH-quinone oxidoreductase subunit K of Parafrankia sp. (strain EAN1pec).